A 428-amino-acid polypeptide reads, in one-letter code: Glutamate-1-semialdehyde 2,1-aminomutase 1 (428 aa).

Lys-268 is subject to N6-(pyridoxal phosphate)lysine.

The protein belongs to the class-III pyridoxal-phosphate-dependent aminotransferase family. HemL subfamily. In terms of assembly, homodimer. Requires pyridoxal 5'-phosphate as cofactor.

The protein resides in the cytoplasm. The catalysed reaction is (S)-4-amino-5-oxopentanoate = 5-aminolevulinate. The protein operates within porphyrin-containing compound metabolism; protoporphyrin-IX biosynthesis; 5-aminolevulinate from L-glutamyl-tRNA(Glu): step 2/2. The sequence is that of Glutamate-1-semialdehyde 2,1-aminomutase 1 from Bacillus cereus (strain G9842).